Consider the following 216-residue polypeptide: Uracil phosphoribosyltransferase (216 aa).

Residues Arg85, Arg110, and 135–143 (DPMVATGYS) each bind 5-phospho-alpha-D-ribose 1-diphosphate. Uracil is bound by residues Ile200 and 205–207 (GDA). Asp206 provides a ligand contact to 5-phospho-alpha-D-ribose 1-diphosphate.

It belongs to the UPRTase family. Mg(2+) serves as cofactor.

It carries out the reaction UMP + diphosphate = 5-phospho-alpha-D-ribose 1-diphosphate + uracil. Its pathway is pyrimidine metabolism; UMP biosynthesis via salvage pathway; UMP from uracil: step 1/1. Its activity is regulated as follows. Allosterically activated by GTP. Catalyzes the conversion of uracil and 5-phospho-alpha-D-ribose 1-diphosphate (PRPP) to UMP and diphosphate. The sequence is that of Uracil phosphoribosyltransferase from Paraburkholderia xenovorans (strain LB400).